The sequence spans 403 residues: MSKFNRIHLVVLDSVGIGAAPDANNFVNAGVPDGASDTLGHISKTVGLNVPNMAKIGLGNIPRETPLKTVAAESNPTGYATKLEEVSLGKDTMTGHWEIMGLNITEPFDTFWNGFPEEILTKIEEFSGRKVIREANKPYSGTAVIDDFGPRQMETGELIIYTSADPVLQIAAHEDIIPLDELYRICEYARSITLERPALLGRIIARPYVGEPGNFTRTANRRDLAVSPFAPTVLDKLNEAGIDTYAVGKINDIFNGAGINHDMGHNKSNSHGIDTLLKTMGLAEFEKGFSFTNLVDFDALYGHRRNAHGYRDCLHEFDERLPEIIAAMRENDLLLITADHGNDPTYAGTDHTREYIPLLAYSPAFKGNGVIPVGHFADISATVADNFGVETAMIGESFLDKLV.

6 residues coordinate Mn(2+): Asp-13, Asp-298, His-303, Asp-339, His-340, and His-351.

It belongs to the phosphopentomutase family. Requires Mn(2+) as cofactor.

The protein resides in the cytoplasm. It carries out the reaction 2-deoxy-alpha-D-ribose 1-phosphate = 2-deoxy-D-ribose 5-phosphate. The enzyme catalyses alpha-D-ribose 1-phosphate = D-ribose 5-phosphate. Its pathway is carbohydrate degradation; 2-deoxy-D-ribose 1-phosphate degradation; D-glyceraldehyde 3-phosphate and acetaldehyde from 2-deoxy-alpha-D-ribose 1-phosphate: step 1/2. Isomerase that catalyzes the conversion of deoxy-ribose 1-phosphate (dRib-1-P) and ribose 1-phosphate (Rib-1-P) to deoxy-ribose 5-phosphate (dRib-5-P) and ribose 5-phosphate (Rib-5-P), respectively. The sequence is that of Phosphopentomutase from Streptococcus pneumoniae (strain Hungary19A-6).